A 58-amino-acid polypeptide reads, in one-letter code: Putative transcript Y 13 protein (58 aa).

Residues Leu-17 to Ala-37 form a helical membrane-spanning segment.

It is found in the membrane. The chain is Putative transcript Y 13 protein (TTTY13) from Homo sapiens (Human).